The sequence spans 355 residues: Probable tRNA-dihydrouridine synthase 1 (355 aa).

FMN-binding positions include 48 to 50 (PLS) and Q102. The Proton donor role is filled by C132. FMN is bound by residues K171, 232–234 (NGD), and 256–257 (SR).

This sequence belongs to the Dus family. It depends on FMN as a cofactor.

It catalyses the reaction a 5,6-dihydrouridine in tRNA + NAD(+) = a uridine in tRNA + NADH + H(+). The enzyme catalyses a 5,6-dihydrouridine in tRNA + NADP(+) = a uridine in tRNA + NADPH + H(+). Functionally, catalyzes the synthesis of 5,6-dihydrouridine (D), a modified base found in the D-loop of most tRNAs, via the reduction of the C5-C6 double bond in target uridines. This is Probable tRNA-dihydrouridine synthase 1 (dus1) from Synechocystis sp. (strain ATCC 27184 / PCC 6803 / Kazusa).